Consider the following 465-residue polypeptide: Hydroxyacid-oxoacid transhydrogenase, mitochondrial (465 aa).

It belongs to the iron-containing alcohol dehydrogenase family. Hydroxyacid-oxoacid transhydrogenase subfamily.

The protein resides in the mitochondrion. It carries out the reaction (S)-3-hydroxybutanoate + 2-oxoglutarate = (R)-2-hydroxyglutarate + acetoacetate. The catalysed reaction is 4-hydroxybutanoate + 2-oxoglutarate = (R)-2-hydroxyglutarate + succinate semialdehyde. Its function is as follows. Catalyzes the cofactor-independent reversible oxidation of gamma-hydroxybutyrate (GHB) to succinic semialdehyde (SSA) coupled to reduction of 2-ketoglutarate (2-KG) to D-2-hydroxyglutarate (D-2-HG). L-3-hydroxybutyrate (L-3-OHB) is also a substrate for HOT when using 2-KG as hydrogen acceptor, resulting in the formation of D-2-HG. The chain is Hydroxyacid-oxoacid transhydrogenase, mitochondrial from Caenorhabditis briggsae.